Consider the following 113-residue polypeptide: MEDLSTMQCEACRPEAPRVSEDEIRELHPQVPDWEIIEEDEVRRLQRVFKFGNFAEALDFTNKTGALAEEAGHHPAILTEYGQVTVTWWSHKIKGLHKNDFIMAAKTDQLLKH.

Belongs to the pterin-4-alpha-carbinolamine dehydratase family.

The enzyme catalyses (4aS,6R)-4a-hydroxy-L-erythro-5,6,7,8-tetrahydrobiopterin = (6R)-L-erythro-6,7-dihydrobiopterin + H2O. This chain is Putative pterin-4-alpha-carbinolamine dehydratase, found in Nitrosococcus oceani (strain ATCC 19707 / BCRC 17464 / JCM 30415 / NCIMB 11848 / C-107).